Consider the following 178-residue polypeptide: Endoribonuclease YbeY (178 aa).

Zn(2+) is bound by residues H118, H122, and H128.

The protein belongs to the endoribonuclease YbeY family. It depends on Zn(2+) as a cofactor.

The protein resides in the cytoplasm. In terms of biological role, single strand-specific metallo-endoribonuclease involved in late-stage 70S ribosome quality control and in maturation of the 3' terminus of the 16S rRNA. The protein is Endoribonuclease YbeY of Mycolicibacterium gilvum (strain PYR-GCK) (Mycobacterium gilvum (strain PYR-GCK)).